A 268-amino-acid chain; its full sequence is Esterase PIR7B (268 aa).

Residue Ser-86 is the Acyl-ester intermediate of the active site. Catalysis depends on charge relay system residues Asp-218 and His-246.

It belongs to the AB hydrolase superfamily.

Exhibits esterase activity towards naphthol AS-acetate in vitro. This Oryza sativa subsp. japonica (Rice) protein is Esterase PIR7B (PIR7B).